Here is a 150-residue protein sequence, read N- to C-terminus: Guanine nucleotide-binding protein subunit gamma 2 (150 aa).

Positions 1 to 11 (MRGEANGEEEQ) are enriched in acidic residues. Residues 1 to 59 (MRGEANGEEEQQPPRRNHLRDDAEEEEEVERRAARPVSGQQQQQQRRRPTDVGGGAAMR) are disordered. Residues 65–97 (GKHRLSAAIARLDQELQSLQDELNELETMEPAS) adopt a coiled-coil conformation. Residues 71–137 (AAIARLDQEL…RWFQRVRSSR (67 aa)) enclose the G protein gamma domain.

As to quaternary structure, g proteins are composed of 3 units, alpha, beta and gamma. Interacts with the beta subunit RGB1.

The protein localises to the cell membrane. Guanine nucleotide-binding proteins (G proteins) are involved as modulators or transducers in various transmembrane signaling systems. In Oryza sativa subsp. indica (Rice), this protein is Guanine nucleotide-binding protein subunit gamma 2.